The chain runs to 389 residues: Chalcone synthase (389 aa).

Cysteine 164 is an active-site residue.

Belongs to the thiolase-like superfamily. Chalcone/stilbene synthases family.

The enzyme catalyses (E)-4-coumaroyl-CoA + 3 malonyl-CoA + 3 H(+) = 2',4,4',6'-tetrahydroxychalcone + 3 CO2 + 4 CoA. It functions in the pathway secondary metabolite biosynthesis; flavonoid biosynthesis. Functionally, the primary product of this enzyme is 4,2',4',6'-tetrahydroxychalcone (also termed naringenin-chalcone or chalcone) which can under specific conditions spontaneously isomerize into naringenin. The chain is Chalcone synthase (CHS) from Pueraria montana var. lobata (Kudzu vine).